A 196-amino-acid chain; its full sequence is uncharacterized protein (196 aa).

The N-terminal stretch at 1–27 (MSVLSRAVQLAFVALGLCLFFSNLVAA) is a signal peptide.

Its subcellular location is the secreted. This is an uncharacterized protein from Arthroderma benhamiae (strain ATCC MYA-4681 / CBS 112371) (Trichophyton mentagrophytes).